The primary structure comprises 179 residues: UPF0227 protein Sbal195_2522 (179 aa).

This sequence belongs to the UPF0227 family.

In Shewanella baltica (strain OS195), this protein is UPF0227 protein Sbal195_2522.